The following is a 218-amino-acid chain: MICRTCLRRASGFARPAAAAATRPMVAASSRAAFSTTFSVCTPPAATPAAAAPATSTAEAGLAPVPGAATTEQAKAAISSCPAGTKLNGLNYFKNKADPVALPDEEYPEWLWRCLEVQKKTDDAADADAGDEFSKSKKQRRLAMKRARAQEAKILASGDLEALAPKIPLQKQSVNLPGAVNGGVQDAVLADEKREELRKAMRKERKAKIKESNYLKAM.

It belongs to the mitochondrion-specific ribosomal protein mL54 family. In terms of assembly, component of the mitochondrial large ribosomal subunit (mt-LSU). Mature N.crassa 74S mitochondrial ribosomes consist of a small (37S) and a large (54S) subunit. The 37S small subunit contains a 16S ribosomal RNA (16S mt-rRNA) and 32 different proteins. The 54S large subunit contains a 23S rRNA (23S mt-rRNA) and 42 different proteins.

The protein resides in the mitochondrion. Functionally, component of the mitochondrial ribosome (mitoribosome), a dedicated translation machinery responsible for the synthesis of mitochondrial genome-encoded proteins, including at least some of the essential transmembrane subunits of the mitochondrial respiratory chain. The mitoribosomes are attached to the mitochondrial inner membrane and translation products are cotranslationally integrated into the membrane. The chain is Large ribosomal subunit protein mL54 (mrpl37) from Neurospora crassa (strain ATCC 24698 / 74-OR23-1A / CBS 708.71 / DSM 1257 / FGSC 987).